Here is a 282-residue protein sequence, read N- to C-terminus: MERPSLRALLLGAAGLLLLLLPLSSSSSSDTCGPCEPASCPPLPPLGCLLGETRDACGCCPMCARGEGEPCGGGGAGRGYCAPGMECVKSRKRRKGKAGAAAGGPGVSGVCVCKSRYPVCGSDGTTYPSGCQLRAASQRAESRGEKAITQVSKGTCEQGPSIVTPPKDIWNVTGAQVYLSCEVIGIPTPVLIWNKVKRGHYGVQRTELLPGDRDNLAIQTRGGPEKHEVTGWVLVSPLSKEDAGEYECHASNSQGQASASAKITVVDALHEIPVKKGEGAEL.

A signal peptide spans 1–26; the sequence is MERPSLRALLLGAAGLLLLLLPLSSS. In terms of domain architecture, IGFBP N-terminal spans 28 to 114; the sequence is SSDTCGPCEP…PGVSGVCVCK (87 aa). Disulfide bonds link Cys-32-Cys-57, Cys-35-Cys-59, Cys-40-Cys-60, Cys-48-Cys-63, Cys-71-Cys-87, Cys-81-Cys-111, and Cys-120-Cys-156. The Kazal-like domain occupies 105-158; the sequence is PGVSGVCVCKSRYPVCGSDGTTYPSGCQLRAASQRAESRGEKAITQVSKGTCEQ. The Ig-like C2-type domain maps to 160–264; the sequence is PSIVTPPKDI…GQASASAKIT (105 aa). N-linked (GlcNAc...) asparagine glycosylation is present at Asn-171. A disulfide bridge links Cys-181 with Cys-248. A Phosphoserine; by FAM20C modification is found at Ser-239.

In terms of assembly, may interact with VPS24/CHMP3; the relevance of such interaction however remains unclear. Interacts with CD93; this interaction plays a role in endothelial cells angiogenesis. Post-translationally, N-glycosylated.

It localises to the secreted. Functionally, binds IGF1 and IGF2 with a relatively low affinity. Stimulates prostacyclin (PGI2) production. Stimulates cell adhesion. Acts as a ligand for CD93 to play a role in angiogenesis. This is Insulin-like growth factor-binding protein 7 (IGFBP7) from Homo sapiens (Human).